A 349-amino-acid chain; its full sequence is Arginine kinase (349 aa).

Positions 3-85 (DLAELWEKVS…LGPVILDYHK (83 aa)) constitute a Phosphagen kinase N-terminal domain. 58 to 62 (GVGVY) serves as a coordination point for substrate. Residues 113 to 349 (WIVSTRVRVG…EEIIKLEKAA (237 aa)) form the Phosphagen kinase C-terminal domain. Residues 116-120 (STRVR) and H179 each bind ATP. E219 contacts substrate. R223 serves as a coordination point for ATP. C265 contacts substrate. Residues 274 to 278 (RASVH) and 302 to 307 (RGIHGE) contribute to the ATP site. E307 is a substrate binding site.

Belongs to the ATP:guanido phosphotransferase family.

It catalyses the reaction L-arginine + ATP = N(omega)-phospho-L-arginine + ADP + H(+). This Liolophura japonica (Chiton) protein is Arginine kinase.